A 95-amino-acid polypeptide reads, in one-letter code: Co-chaperonin GroES (95 aa).

The protein belongs to the GroES chaperonin family. In terms of assembly, heptamer of 7 subunits arranged in a ring. Interacts with the chaperonin GroEL.

Its subcellular location is the cytoplasm. Its function is as follows. Together with the chaperonin GroEL, plays an essential role in assisting protein folding. The GroEL-GroES system forms a nano-cage that allows encapsulation of the non-native substrate proteins and provides a physical environment optimized to promote and accelerate protein folding. GroES binds to the apical surface of the GroEL ring, thereby capping the opening of the GroEL channel. The protein is Co-chaperonin GroES of Streptococcus uberis (strain ATCC BAA-854 / 0140J).